An 80-amino-acid polypeptide reads, in one-letter code: uncharacterized protein (80 aa).

This is an uncharacterized protein from Escherichia coli (Bacteriophage T4).